The chain runs to 318 residues: Aspartate carbamoyltransferase catalytic subunit (318 aa).

Residues R54 and T55 each contribute to the carbamoyl phosphate site. Position 82 (K82) interacts with L-aspartate. Carbamoyl phosphate contacts are provided by R104, H134, and Q137. L-aspartate contacts are provided by R174 and R230. Residues G271 and P272 each contribute to the carbamoyl phosphate site.

This sequence belongs to the aspartate/ornithine carbamoyltransferase superfamily. ATCase family. As to quaternary structure, heterododecamer (2C3:3R2) of six catalytic PyrB chains organized as two trimers (C3), and six regulatory PyrI chains organized as three dimers (R2).

It catalyses the reaction carbamoyl phosphate + L-aspartate = N-carbamoyl-L-aspartate + phosphate + H(+). Its pathway is pyrimidine metabolism; UMP biosynthesis via de novo pathway; (S)-dihydroorotate from bicarbonate: step 2/3. Catalyzes the condensation of carbamoyl phosphate and aspartate to form carbamoyl aspartate and inorganic phosphate, the committed step in the de novo pyrimidine nucleotide biosynthesis pathway. The chain is Aspartate carbamoyltransferase catalytic subunit from Clavibacter michiganensis subsp. michiganensis (strain NCPPB 382).